Here is a 181-residue protein sequence, read N- to C-terminus: Endoribonuclease YbeY (181 aa).

Zn(2+) is bound by residues H115, H119, and H125.

This sequence belongs to the endoribonuclease YbeY family. Zn(2+) is required as a cofactor.

It localises to the cytoplasm. Functionally, single strand-specific metallo-endoribonuclease involved in late-stage 70S ribosome quality control and in maturation of the 3' terminus of the 16S rRNA. The chain is Endoribonuclease YbeY from Bifidobacterium animalis subsp. lactis (strain AD011).